The following is a 119-amino-acid chain: Nascent polypeptide-associated complex protein (119 aa).

The region spanning 5–73 (RMNSREMRRL…FRETPKKQEG (69 aa)) is the NAC-A/B domain.

This sequence belongs to the NAC-alpha family. Homodimer. Interacts with the ribosome. Binds ribosomal RNA.

In terms of biological role, contacts the emerging nascent chain on the ribosome. The chain is Nascent polypeptide-associated complex protein from Thermoplasma volcanium (strain ATCC 51530 / DSM 4299 / JCM 9571 / NBRC 15438 / GSS1).